The sequence spans 122 residues: WUSCHEL-related homeobox 7 (122 aa).

Positions 25-89 form a DNA-binding region, homeobox; WUS-type; the sequence is AKCGRWNPTV…NHKARERQKC (65 aa). The segment covering 98-111 has biased composition (basic and acidic residues); sequence DHRQDTDLSKPRRD. A disordered region spans residues 98-122; it reads DHRQDTDLSKPRRDNVRRHQLPAKG. The span at 112–122 shows a compositional bias: basic residues; the sequence is NVRRHQLPAKG.

Belongs to the WUS homeobox family.

Its subcellular location is the nucleus. In terms of biological role, potential transcription factor that plays a central role during developmental processes. The polypeptide is WUSCHEL-related homeobox 7 (WOX7) (Arabidopsis thaliana (Mouse-ear cress)).